The chain runs to 458 residues: Smoothelin-like protein 2 (458 aa).

The stretch at 24 to 88 forms a coiled coil; it reads LEGAVRALHE…RQVESLGLTT (65 aa). Disordered stretches follow at residues 87–111, 123–142, and 151–312; these read TTGL…RAPR, FSLS…SELE, and IIEN…GAQA. Positions 94 to 104 are enriched in pro residues; it reads PGTPSPPPAPG. Thr96 bears the Phosphothreonine mark. A phosphoserine mark is found at Ser98, Ser126, and Ser131. Residues 131-142 are compositionally biased toward basic and acidic residues; that stretch reads SLDHHDEASELE. 2 stretches are compositionally biased toward low complexity: residues 158–167 and 209–220; these read PGADPGDGPP and TSATALSPTSAA. Positions 225–244 are enriched in polar residues; sequence LSSSPSEATTPWTPSPSEKN. Over residues 245-254 the composition is skewed to low complexity; the sequence is SSLPRSLSSS. Ser252, Ser254, and Ser267 each carry phosphoserine. The segment covering 270-283 has biased composition (pro residues); it reads LVTPPQSPPSPQPP. Thr272 is modified (phosphothreonine). Ser276 is modified (phosphoserine). The span at 290 to 299 shows a compositional bias: basic and acidic residues; sequence RPGERRRELV. Positions 300 to 310 are enriched in polar residues; the sequence is RSQTLPRTSGA. Phosphoserine is present on Ser341. The Calponin-homology (CH) domain occupies 348 to 455; that stretch reads SSIKQILLEW…YVQSLYNHLR (108 aa).

The protein belongs to the smoothelin family.

In Bos taurus (Bovine), this protein is Smoothelin-like protein 2 (SMTNL2).